A 664-amino-acid chain; its full sequence is E3 ubiquitin-protein ligase CHFR (664 aa).

Positions 1–21 (MERPEEGKQSPPPQPWGRLLR) are disordered. Residues 38–89 (WTIGRRRGCDLSFPSNKLVSGDHCRIVVDEKSGQVTLEDTSTSGTVINKLKV) form the FHA domain. The disordered stretch occupies residues 142–267 (FHGTKDTSGA…KKMRGDGDLD (126 aa)). Positions 186-198 (PTASASSTEPSPA) are enriched in low complexity. S244 bears the Phosphoserine mark. The span at 254-264 (EPVKKKMRGDG) shows a compositional bias: basic and acidic residues. The RING-type zinc-finger motif lies at 304 to 343 (CIICQDLLHDCVSLQPCMHTFCAACYSGWMERSSLCPTCR). At T386 the chain carries Phosphothreonine. 2 disordered regions span residues 388–417 (DMLQPKVRRSFSDEEGSSEDLLELSDVDSE) and 439–461 (AQPPHCPAPEGEPGAPQALGDAP). The span at 400–417 (DEEGSSEDLLELSDVDSE) shows a compositional bias: acidic residues. Residues 633–655 (PDCYWGRNCRTQVKAHHAMKFNH) form a PBZ-type zinc finger.

This sequence belongs to the CHFR family. Interacts with HDAC1 and HDAC2. Interacts with PML (with sumoylated form of PML). Poly-ADP-ribosylated. In addition to binding non covalently poly(ADP-ribose) via its PBZ-type zinc finger, the protein is also covalently poly-ADP-ribosylated by PARP1. In terms of processing, autoubiquitinated; may regulate its cellular level. Post-translationally, phosphorylated by PKB. Phosphorylation may affect its E3 ligase activity. In terms of tissue distribution, ubiquitous.

Its subcellular location is the nucleus. The protein resides in the PML body. It carries out the reaction S-ubiquitinyl-[E2 ubiquitin-conjugating enzyme]-L-cysteine + [acceptor protein]-L-lysine = [E2 ubiquitin-conjugating enzyme]-L-cysteine + N(6)-ubiquitinyl-[acceptor protein]-L-lysine.. It functions in the pathway protein modification; protein ubiquitination. E3 ubiquitin-protein ligase that functions in the antephase checkpoint by actively delaying passage into mitosis in response to microtubule poisons. Acts in early prophase before chromosome condensation, when the centrosome move apart from each other along the periphery of the nucleus. Probably involved in signaling the presence of mitotic stress caused by microtubule poisons by mediating the 'Lys-48'-linked ubiquitination of target proteins, leading to their degradation by the proteasome. Promotes the ubiquitination and subsequent degradation of AURKA and PLK1. Probably acts as a tumor suppressor, possibly by mediating the polyubiquitination of HDAC1, leading to its degradation. May also promote the formation of 'Lys-63'-linked polyubiquitin chains and functions with the specific ubiquitin-conjugating UBC13-MMS2 (UBE2N-UBE2V2) heterodimer. Substrates that are polyubiquitinated at 'Lys-63' are usually not targeted for degradation, but are rather involved in signaling cellular stress. In Homo sapiens (Human), this protein is E3 ubiquitin-protein ligase CHFR (CHFR).